Here is a 353-residue protein sequence, read N- to C-terminus: Methylthioribose-1-phosphate isomerase (353 aa).

Substrate-binding positions include 51–53 (RGA), Arg94, and Gln199. Asp240 (proton donor) is an active-site residue. 250-251 (NK) is a substrate binding site.

It belongs to the eIF-2B alpha/beta/delta subunits family. MtnA subfamily. Homodimer.

It carries out the reaction 5-(methylsulfanyl)-alpha-D-ribose 1-phosphate = 5-(methylsulfanyl)-D-ribulose 1-phosphate. It participates in amino-acid biosynthesis; L-methionine biosynthesis via salvage pathway; L-methionine from S-methyl-5-thio-alpha-D-ribose 1-phosphate: step 1/6. Functionally, catalyzes the interconversion of methylthioribose-1-phosphate (MTR-1-P) into methylthioribulose-1-phosphate (MTRu-1-P). This Bacillus licheniformis (strain ATCC 14580 / DSM 13 / JCM 2505 / CCUG 7422 / NBRC 12200 / NCIMB 9375 / NCTC 10341 / NRRL NRS-1264 / Gibson 46) protein is Methylthioribose-1-phosphate isomerase.